The chain runs to 54 residues: UPF0391 membrane protein Pnap_0920 (54 aa).

2 helical membrane passes run 6–26 (VVFL…IAAG) and 30–50 (IAKI…VVSL).

It belongs to the UPF0391 family.

The protein localises to the cell membrane. The sequence is that of UPF0391 membrane protein Pnap_0920 from Polaromonas naphthalenivorans (strain CJ2).